The chain runs to 637 residues: Keratin, type II cytoskeletal 1 (637 aa).

A head region spans residues 1–187 (MSLQCSSRSL…DPQIQKVKSQ (187 aa)). Arg-12 is subject to Omega-N-methylarginine. 2 positions are modified to phosphoserine: Ser-21 and Ser-24. Arg-49 bears the Omega-N-methylarginine mark. Ser-67 bears the Phosphoserine mark. Positions 180–328 (QIQKVKSQER…DIDFFSALYQ (149 aa)) form a coiled coil. Residues 188–223 (EREQIKSLNDKFASFIDKVRFLEQQNQVLQTKWELL) are coil 1A. Residues 188–501 (EREQIKSLND…KLLEGEEIRM (314 aa)) form the IF rod domain. Residues 224–243 (QQVDTTTRTQNLDPFFENYI) are linker 1. The coil 1B stretch occupies residues 244 to 334 (SILRRKVDSL…ALYQMEMSQM (91 aa)). N6,N6-dimethyllysine is present on Lys-284. The tract at residues 335-358 (QTQISETNVVLSMDNNRSLDLDGI) is linker 12. Ser-352 carries the post-translational modification Phosphoserine. Residues 359-497 (ISEVKAQYDS…ATYKKLLEGE (139 aa)) are coil 2. The stretch at 397-483 (DSVRNTKMEI…QELMNTKLAL (87 aa)) forms a coiled coil. A tail region spans residues 498-637 (EIRMSGECTP…VSTSYSRGTK (140 aa)). Disordered stretches follow at residues 505-533 (CTPNVSVSVSTSHTSMSGSSSRGGGSGGG) and 563-637 (YGGG…RGTK). Over residues 509 to 524 (VSVSVSTSHTSMSGSS) the composition is skewed to low complexity. Omega-N-methylarginine is present on residues Arg-526, Arg-585, and Arg-607. The span at 563-618 (YGGGSGGGSYGGGSGGGSSGSHRGGSGGGGGSSGGSYGGSSGGGRGGSSSGGGGVK) shows a compositional bias: gly residues. Polar residues predominate over residues 624 to 637 (TVKFVSTSYSRGTK).

This sequence belongs to the intermediate filament family. As to quaternary structure, heterotetramer of two type I and two type II keratins. Heterodimer with KRT10. Two heterodimers of KRT1 and KRT10 form a heterotetramer. Forms a heterodimer with KRT14; the interaction is more abundant in the absence of KRT5. Interacts with PLEC isoform 1C, when in a heterodimer with KRT10. Interacts with ITGB1 in the presence of RACK1 and SRC, and with RACK1. Interacts with C1QBP; the association represents a cell surface kininogen receptor. Interacts with EPPK1; interaction is dependent of higher-order structure of intermediate filament. Undergoes deimination of some arginine residues (citrullination). In terms of tissue distribution, expressed in the infundibular regions of the ear, the interfollicular epidermis of the back, in the interscale regions containing hair follicles in the tail, and in the soles of the footpads (at protein level).

It is found in the cell membrane. Its subcellular location is the cytoplasm. Functionally, may regulate the activity of kinases such as PKC and SRC via binding to integrin beta-1 (ITB1) and the receptor of activated protein C kinase 1 (RACK1). In complex with C1QBP is a high affinity receptor for kininogen-1/HMWK. This Mus musculus (Mouse) protein is Keratin, type II cytoskeletal 1 (Krt1).